The chain runs to 298 residues: Lipoyl synthase (298 aa).

[4Fe-4S] cluster-binding residues include C40, C45, C51, C67, C71, C74, and S280. One can recognise a Radical SAM core domain in the interval 53 to 269 (AVRRTATFMI…KEIALSKGFS (217 aa)).

The protein belongs to the radical SAM superfamily. Lipoyl synthase family. [4Fe-4S] cluster serves as cofactor.

Its subcellular location is the cytoplasm. It carries out the reaction [[Fe-S] cluster scaffold protein carrying a second [4Fe-4S](2+) cluster] + N(6)-octanoyl-L-lysyl-[protein] + 2 oxidized [2Fe-2S]-[ferredoxin] + 2 S-adenosyl-L-methionine + 4 H(+) = [[Fe-S] cluster scaffold protein] + N(6)-[(R)-dihydrolipoyl]-L-lysyl-[protein] + 4 Fe(3+) + 2 hydrogen sulfide + 2 5'-deoxyadenosine + 2 L-methionine + 2 reduced [2Fe-2S]-[ferredoxin]. It participates in protein modification; protein lipoylation via endogenous pathway; protein N(6)-(lipoyl)lysine from octanoyl-[acyl-carrier-protein]. Catalyzes the radical-mediated insertion of two sulfur atoms into the C-6 and C-8 positions of the octanoyl moiety bound to the lipoyl domains of lipoate-dependent enzymes, thereby converting the octanoylated domains into lipoylated derivatives. This Geobacillus kaustophilus (strain HTA426) protein is Lipoyl synthase.